Here is a 151-residue protein sequence, read N- to C-terminus: Large ribosomal subunit protein uL15 (151 aa).

The tract at residues 1–58 (MELNQLKSVPKARNHKTKTLGRGHGSGLGKTSGRGQKGQKARKSGLTRPGFEGGQTPL) is disordered. Positions 10-21 (PKARNHKTKTLG) are enriched in basic residues. The segment covering 22–36 (RGHGSGLGKTSGRGQ) has biased composition (gly residues).

This sequence belongs to the universal ribosomal protein uL15 family. Part of the 50S ribosomal subunit.

In terms of biological role, binds to the 23S rRNA. The polypeptide is Large ribosomal subunit protein uL15 (Mycoplasma pneumoniae (strain ATCC 29342 / M129 / Subtype 1) (Mycoplasmoides pneumoniae)).